The sequence spans 226 residues: Probable thiol methyltransferase 2 (226 aa).

S-adenosyl-L-methionine contacts are provided by Trp29, Trp33, Trp40, and Gly67. Ser79 carries the phosphoserine modification. Residues Asp88, 116-117 (DF), and Tyr132 each bind S-adenosyl-L-methionine.

Belongs to the class I-like SAM-binding methyltransferase superfamily. TPMT family.

It carries out the reaction a thiol + S-adenosyl-L-methionine = a methyl thioether + S-adenosyl-L-homocysteine + H(+). S-adenosyl-L-methionine-dependent methyltransferase. This chain is Probable thiol methyltransferase 2 (HOL3), found in Arabidopsis thaliana (Mouse-ear cress).